Reading from the N-terminus, the 146-residue chain is Large ribosomal subunit protein uL15 (146 aa).

Residues 1-13 are compositionally biased toward basic and acidic residues; the sequence is MKLHELKPAEGSR. Positions 1–51 are disordered; it reads MKLHELKPAEGSRKVRNRVGRGIGSGNGKTAGRGHKGQNARSGGGVRLGFE. Composition is skewed to gly residues over residues 21 to 31 and 42 to 51; these read RGIGSGNGKTA and SGGGVRLGFE.

Belongs to the universal ribosomal protein uL15 family. As to quaternary structure, part of the 50S ribosomal subunit.

Its function is as follows. Binds to the 23S rRNA. The polypeptide is Large ribosomal subunit protein uL15 (Bacillus mycoides (strain KBAB4) (Bacillus weihenstephanensis)).